Here is a 124-residue protein sequence, read N- to C-terminus: Small ribosomal subunit protein bS6 (124 aa).

Positions 98 to 124 are disordered; sequence EASPMLKAREERPRREDVREEAEEAAE. A compositionally biased stretch (basic and acidic residues) spans 104-115; it reads KAREERPRREDV.

This sequence belongs to the bacterial ribosomal protein bS6 family.

Its function is as follows. Binds together with bS18 to 16S ribosomal RNA. The protein is Small ribosomal subunit protein bS6 of Tolumonas auensis (strain DSM 9187 / NBRC 110442 / TA 4).